The primary structure comprises 456 residues: Ribonuclease inhibitor (456 aa).

N-acetylmethionine is present on Met1. LRR repeat units lie at residues 15 to 43 (WTELLPLIQQYEVVRLDDCGLTEVRCKDI), 44 to 71 (SSAVQANPALTELSLRTNELGDGGVGLV), 72 to 100 (LQGLQNPTCKIQKLSLQNCGLTEAGCGIL), 101 to 128 (PGMLRSLSTLRELHLNDNPMGDAGLKLL), 129 to 157 (CEGLQDPQCRLEKLQLEYCNLTATSCEPL), 158 to 185 (ASVLRVKADFKELVLSNNDLHEPGVRIL), 186 to 214 (CQGLKDSACQLESLKLENCGITAANCKDL), 215 to 242 (CDVVASKASLQELDLSSNKLGNAGIAAL), 243 to 271 (CPGLLLPSCKLRTLWLWECDITAEGCKDL), 272 to 299 (CRVLRAKQSLKELSLASNELKDEGARLL), 300 to 328 (CESLLEPGCQLESLWIKTCSLTAASCPYF), 329 to 356 (CSVLTKSRSLLELQMSSNPLGDEGVQEL), 357 to 385 (CKALSQPDTVLRELWLGDCDVTNSGCSSL), 386 to 413 (ANVLLANRSLRELDLSNNCMGGPGVLQL), and 414 to 442 (LESLKQPSCTLQQLVLYDIYWTNEVEEQL). At Ser86 the chain carries Phosphoserine.

Forms high-affinity heterodimers with RNASE1, ANG and RNASE2.

Its subcellular location is the cytoplasm. It localises to the nucleus. Functionally, ribonuclease inhibitor which inhibits RNASE1, RNASE2 and angiogenin (ANG). May play a role in redox homeostasis. Required to inhibit the cytotoxic tRNA ribonuclease activity of ANG in the cytoplasm in absence of stress. Relocates to the nucleus in response to stress, relieving inhibition of ANG in the cytoplasm, and inhibiting the angiogenic activity of ANG in the nucleus. This Mus musculus (Mouse) protein is Ribonuclease inhibitor (Rnh1).